Consider the following 396-residue polypeptide: S-adenosylmethionine synthase (396 aa).

E11 lines the Mg(2+) pocket. Residue H17 participates in ATP binding. Residue E45 participates in K(+) binding. The L-methionine site is built by E58 and Q101. ATP is bound by residues 169–171, 237–240, D248, 254–255, A271, K275, and K279; these read DGK, SGRF, and RK. L-methionine is bound at residue D248. L-methionine is bound at residue K279.

The protein belongs to the AdoMet synthase family. As to quaternary structure, homotetramer. Requires Mn(2+) as cofactor. Mg(2+) is required as a cofactor. It depends on Co(2+) as a cofactor. K(+) serves as cofactor.

The protein localises to the cytoplasm. The enzyme catalyses L-methionine + ATP + H2O = S-adenosyl-L-methionine + phosphate + diphosphate. Its pathway is amino-acid biosynthesis; S-adenosyl-L-methionine biosynthesis; S-adenosyl-L-methionine from L-methionine: step 1/1. Functionally, catalyzes the formation of S-adenosylmethionine from methionine and ATP. The reaction comprises two steps that are both catalyzed by the same enzyme: formation of S-adenosylmethionine (AdoMet) and triphosphate, and subsequent hydrolysis of the triphosphate. This Medicago sativa subsp. falcata (Sickle medic) protein is S-adenosylmethionine synthase (SAMS).